A 493-amino-acid polypeptide reads, in one-letter code: Inosine-5'-monophosphate dehydrogenase (493 aa).

CBS domains are found at residues valine 97–isoleucine 155 and methionine 159–glutamate 219. NAD(+) contacts are provided by residues aspartate 253 and glycine 303–glycine 305. Residues glycine 305 and glycine 307 each contribute to the K(+) site. Serine 308 is an IMP binding site. Cysteine 310 is a binding site for K(+). The Thioimidate intermediate role is filled by cysteine 310. IMP-binding positions include aspartate 343–glycine 345, glycine 366–serine 367, and tyrosine 390–glycine 394. Arginine 406 serves as the catalytic Proton acceptor. Glutamate 421 contributes to the IMP binding site. K(+)-binding residues include glutamate 475, serine 476, and histidine 477.

The protein belongs to the IMPDH/GMPR family. Homotetramer. Requires K(+) as cofactor.

It carries out the reaction IMP + NAD(+) + H2O = XMP + NADH + H(+). It functions in the pathway purine metabolism; XMP biosynthesis via de novo pathway; XMP from IMP: step 1/1. Its activity is regulated as follows. Mycophenolic acid (MPA) is a non-competitive inhibitor that prevents formation of the closed enzyme conformation by binding to the same site as the amobile flap. In contrast, mizoribine monophosphate (MZP) is a competitive inhibitor that induces the closed conformation. MPA is a potent inhibitor of mammalian IMPDHs but a poor inhibitor of the bacterial enzymes. MZP is a more potent inhibitor of bacterial IMPDH. Catalyzes the conversion of inosine 5'-phosphate (IMP) to xanthosine 5'-phosphate (XMP), the first committed and rate-limiting step in the de novo synthesis of guanine nucleotides, and therefore plays an important role in the regulation of cell growth. The sequence is that of Inosine-5'-monophosphate dehydrogenase from Streptococcus pyogenes serotype M1.